The sequence spans 660 residues: Acetyl-coenzyme A synthetase (660 aa).

CoA-binding positions include 197-200 and Thr317; that span reads RGGK. ATP is bound by residues 397-399, 421-426, Asp512, and Arg528; these read GEP and DTFWQT. Ser536 provides a ligand contact to CoA. ATP is bound at residue Arg539. Mg(2+) is bound by residues Val550 and Val555. Lys625 bears the N6-acetyllysine mark.

This sequence belongs to the ATP-dependent AMP-binding enzyme family. Mg(2+) serves as cofactor. Acetylated. Deacetylation by the SIR2-homolog deacetylase activates the enzyme.

It catalyses the reaction acetate + ATP + CoA = acetyl-CoA + AMP + diphosphate. Catalyzes the conversion of acetate into acetyl-CoA (AcCoA), an essential intermediate at the junction of anabolic and catabolic pathways. AcsA undergoes a two-step reaction. In the first half reaction, AcsA combines acetate with ATP to form acetyl-adenylate (AcAMP) intermediate. In the second half reaction, it can then transfer the acetyl group from AcAMP to the sulfhydryl group of CoA, forming the product AcCoA. The protein is Acetyl-coenzyme A synthetase of Cupriavidus pinatubonensis (strain JMP 134 / LMG 1197) (Cupriavidus necator (strain JMP 134)).